Here is a 327-residue protein sequence, read N- to C-terminus: Inactive peptidyl-prolyl cis-trans isomerase FKBP6 (327 aa).

The tract at residues 1–20 (MSVFSRLRNGIPPSRDDCQS) is disordered. Positions 54 to 143 (DASVLVKYSG…LFEIELIDFL (90 aa)) constitute a PPIase FKBP-type domain. TPR repeat units lie at residues 171-204 (AATEREFGNYLFRQNRFCDAKVRYKRALLLLHRR), 219-252 (LLVLLNLSFVYLKLDRPAMALRYGEQALLIDKRN), and 253-286 (AKALFRCGQACLLLTEYEQARDFLVRAQKEQPCN).

It belongs to the FKBP6 family. As to quaternary structure, interacts with HSP72/HSPA2 and CLTC. Interacts with GAPDH; leading to inhibit GAPDH catalytic activity. Interacts (via TPR repeats) with HSP90.

It is found in the cytoplasm. Its subcellular location is the cytosol. The protein resides in the nucleus. It localises to the chromosome. In terms of biological role, co-chaperone required during spermatogenesis to repress transposable elements and prevent their mobilization, which is essential for the germline integrity. Acts via the piRNA metabolic process, which mediates the repression of transposable elements during meiosis by forming complexes composed of piRNAs and Piwi proteins and govern the methylation and subsequent repression of transposons. Acts as a co-chaperone via its interaction with HSP90 and is required for the piRNA amplification process, the secondary piRNA biogenesis. May be required together with HSP90 in removal of 16 nucleotide ping-pong by-products from Piwi complexes, possibly facilitating turnover of Piwi complexes. In Rattus norvegicus (Rat), this protein is Inactive peptidyl-prolyl cis-trans isomerase FKBP6 (Fkbp6).